Consider the following 198-residue polypeptide: MKALLIDYGSGNLRSAAKALEAAGFSVAVAQDPKAHEEADLLVLPGQGHFGQVMRAFQESGFVERVRRHLERGLPFLGICVGMQVLYEGSEEAPGVRGLGLVPGEVRRFRAGRVPQMGWNALEFGGAFAPLTGRHFYFANSYYGPLTPYSLGKGEYEGTPFTALLAKENLLAPQFHPEKSGKAGLAFLALARRYFEVL.

The 197-residue stretch at Lys-2–Leu-198 folds into the Glutamine amidotransferase type-1 domain. The Nucleophile role is filled by Cys-80. Active-site residues include His-176 and Glu-178.

Heterodimer of HisH and HisF.

The protein resides in the cytoplasm. The catalysed reaction is 5-[(5-phospho-1-deoxy-D-ribulos-1-ylimino)methylamino]-1-(5-phospho-beta-D-ribosyl)imidazole-4-carboxamide + L-glutamine = D-erythro-1-(imidazol-4-yl)glycerol 3-phosphate + 5-amino-1-(5-phospho-beta-D-ribosyl)imidazole-4-carboxamide + L-glutamate + H(+). The enzyme catalyses L-glutamine + H2O = L-glutamate + NH4(+). It functions in the pathway amino-acid biosynthesis; L-histidine biosynthesis; L-histidine from 5-phospho-alpha-D-ribose 1-diphosphate: step 5/9. In terms of biological role, IGPS catalyzes the conversion of PRFAR and glutamine to IGP, AICAR and glutamate. The HisH subunit catalyzes the hydrolysis of glutamine to glutamate and ammonia as part of the synthesis of IGP and AICAR. The resulting ammonia molecule is channeled to the active site of HisF. The polypeptide is Imidazole glycerol phosphate synthase subunit HisH (Thermus thermophilus (strain ATCC BAA-163 / DSM 7039 / HB27)).